A 178-amino-acid chain; its full sequence is 2-C-methyl-D-erythritol 2,4-cyclodiphosphate synthase (178 aa).

A divalent metal cation-binding residues include aspartate 24, histidine 26, and histidine 61. Residue 24–26 (DSH) coordinates 4-CDP-2-C-methyl-D-erythritol 2-phosphate. A 4-CDP-2-C-methyl-D-erythritol 2-phosphate-binding site is contributed by 150–153 (TSGE).

It belongs to the IspF family. Homotrimer. A divalent metal cation is required as a cofactor.

It carries out the reaction 4-CDP-2-C-methyl-D-erythritol 2-phosphate = 2-C-methyl-D-erythritol 2,4-cyclic diphosphate + CMP. Its pathway is isoprenoid biosynthesis; isopentenyl diphosphate biosynthesis via DXP pathway; isopentenyl diphosphate from 1-deoxy-D-xylulose 5-phosphate: step 4/6. In terms of biological role, involved in the biosynthesis of isopentenyl diphosphate (IPP) and dimethylallyl diphosphate (DMAPP), two major building blocks of isoprenoid compounds. Catalyzes the conversion of 4-diphosphocytidyl-2-C-methyl-D-erythritol 2-phosphate (CDP-ME2P) to 2-C-methyl-D-erythritol 2,4-cyclodiphosphate (ME-CPP) with a corresponding release of cytidine 5-monophosphate (CMP). The protein is 2-C-methyl-D-erythritol 2,4-cyclodiphosphate synthase of Chlamydia trachomatis serovar L2 (strain ATCC VR-902B / DSM 19102 / 434/Bu).